Consider the following 238-residue polypeptide: Large ribosomal subunit protein uL1 (238 aa).

Belongs to the universal ribosomal protein uL1 family. In terms of assembly, part of the 50S ribosomal subunit.

In terms of biological role, binds directly to 23S rRNA. The L1 stalk is quite mobile in the ribosome, and is involved in E site tRNA release. Protein L1 is also a translational repressor protein, it controls the translation of the L11 operon by binding to its mRNA. This chain is Large ribosomal subunit protein uL1, found in Rickettsia prowazekii (strain Madrid E).